Here is a 352-residue protein sequence, read N- to C-terminus: Transcription factor BHLH156 (352 aa).

Residues 59–141 (GGDDDDNGGV…RSKTIVSERK (83 aa)) form a disordered region. The tract at residues 130–143 (RDRSKTIVSERKRR) is basic motif. The region spanning 130–179 (RDRSKTIVSERKRRVRMKEKLYELRALVPNITKMDKASIIADAVVYVKDL) is the bHLH domain. The tract at residues 144 to 179 (VRMKEKLYELRALVPNITKMDKASIIADAVVYVKDL) is helix-loop-helix motif. A disordered region spans residues 194-216 (EEARPIRPPPPSAAAQRPQRQPR). The span at 206–216 (AAAQRPQRQPR) shows a compositional bias: low complexity.

This sequence belongs to the bHLH protein family. Forms homodimers. Interacts with IRO2 in the nucleus. As to expression, expressed in the meristematic zone of lateral and primary roots.

Its subcellular location is the nucleus. Transcription factor involved in positive regulation of genes involved in strategy II iron acquisition, including genes for mugineic acid (MA) family phytosiderophores biosynthesis, and genes involved in S-adenosylmethionine cycle and iron transport. May play a role in the regulation of iron deficiency response by promoting the nuclear localization of IRO2. Possesses transactivation activity in yeast. This Oryza sativa subsp. japonica (Rice) protein is Transcription factor BHLH156.